We begin with the raw amino-acid sequence, 270 residues long: 3-phenylpropionate-dihydrodiol/cinnamic acid-dihydrodiol dehydrogenase (270 aa).

10–34 (FITGGGSGLGLALVERFIEEGAQVA) serves as a coordination point for NAD(+). Ser143 is a substrate binding site. Tyr156 functions as the Proton acceptor in the catalytic mechanism.

This sequence belongs to the short-chain dehydrogenases/reductases (SDR) family.

The enzyme catalyses 3-(cis-5,6-dihydroxycyclohexa-1,3-dien-1-yl)propanoate + NAD(+) = 3-(2,3-dihydroxyphenyl)propanoate + NADH + H(+). It catalyses the reaction (2E)-3-(cis-5,6-dihydroxycyclohexa-1,3-dien-1-yl)prop-2-enoate + NAD(+) = (2E)-3-(2,3-dihydroxyphenyl)prop-2-enoate + NADH + H(+). The protein operates within aromatic compound metabolism; 3-phenylpropanoate degradation. Its function is as follows. Converts 3-phenylpropionate-dihydrodiol (PP-dihydrodiol) and cinnamic acid-dihydrodiol (CI-dihydrodiol) into 3-(2,3-dihydroxylphenyl)propanoic acid (DHPP) and 2,3-dihydroxicinnamic acid (DHCI), respectively. The chain is 3-phenylpropionate-dihydrodiol/cinnamic acid-dihydrodiol dehydrogenase from Escherichia coli O8 (strain IAI1).